We begin with the raw amino-acid sequence, 572 residues long: Proline--tRNA ligase (572 aa).

It belongs to the class-II aminoacyl-tRNA synthetase family. ProS type 1 subfamily. In terms of assembly, homodimer.

The protein resides in the cytoplasm. The enzyme catalyses tRNA(Pro) + L-proline + ATP = L-prolyl-tRNA(Pro) + AMP + diphosphate. Functionally, catalyzes the attachment of proline to tRNA(Pro) in a two-step reaction: proline is first activated by ATP to form Pro-AMP and then transferred to the acceptor end of tRNA(Pro). As ProRS can inadvertently accommodate and process non-cognate amino acids such as alanine and cysteine, to avoid such errors it has two additional distinct editing activities against alanine. One activity is designated as 'pretransfer' editing and involves the tRNA(Pro)-independent hydrolysis of activated Ala-AMP. The other activity is designated 'posttransfer' editing and involves deacylation of mischarged Ala-tRNA(Pro). The misacylated Cys-tRNA(Pro) is not edited by ProRS. The polypeptide is Proline--tRNA ligase (Haemophilus influenzae (strain 86-028NP)).